The chain runs to 279 residues: HTH-type transcriptional regulator HdfR (279 aa).

Residues 1-58 enclose the HTH lysR-type domain; it reads MDTELLKTFLEVSRTRHFGRAAESLYLTQSAVSFRIRQLENQLGVNLFTRHRNNIRLT. Residues 18-37 constitute a DNA-binding region (H-T-H motif); sequence FGRAAESLYLTQSAVSFRIR.

The protein belongs to the LysR transcriptional regulatory family.

In terms of biological role, negatively regulates the transcription of the flagellar master operon flhDC by binding to the upstream region of the operon. This chain is HTH-type transcriptional regulator HdfR, found in Escherichia coli (strain SE11).